A 339-amino-acid polypeptide reads, in one-letter code: Cathepsin B (339 aa).

Positions 1–17 (MWQLWASLCCLLALADA) are cleaved as a signal peptide. Residues 18–79 (RSRPSFHPLS…QRVMFTEDLK (62 aa)) constitute a propeptide, activation peptide. Intrachain disulfides connect Cys-93–Cys-122, Cys-105–Cys-150, Cys-141–Cys-207, Cys-142–Cys-146, Cys-179–Cys-211, and Cys-187–Cys-198. Residue Cys-108 is part of the active site. The N-linked (GlcNAc...) asparagine glycan is linked to Asn-192. Lys-220 is subject to N6-acetyllysine. Catalysis depends on residues His-278 and Asn-298. The propeptide occupies 334–339 (QYWEKI).

Belongs to the peptidase C1 family. In terms of assembly, dimer of a heavy chain and a light chain cross-linked by a disulfide bond. Interacts with SRPX2. Directly interacts with SHKBP1.

The protein localises to the lysosome. It is found in the melanosome. It localises to the secreted. Its subcellular location is the extracellular space. The protein resides in the apical cell membrane. The enzyme catalyses Hydrolysis of proteins with broad specificity for peptide bonds. Preferentially cleaves -Arg-Arg-|-Xaa bonds in small molecule substrates (thus differing from cathepsin L). In addition to being an endopeptidase, shows peptidyl-dipeptidase activity, liberating C-terminal dipeptides.. In terms of biological role, thiol protease which is believed to participate in intracellular degradation and turnover of proteins. Cleaves matrix extracellular phosphoglycoprotein MEPE. Involved in the solubilization of cross-linked TG/thyroglobulin in the thyroid follicle lumen. Has also been implicated in tumor invasion and metastasis. In Pongo abelii (Sumatran orangutan), this protein is Cathepsin B (CTSB).